Consider the following 1218-residue polypeptide: Cytosolic carboxypeptidase 1 (1218 aa).

2 disordered regions span residues 476-512 (VVMK…RVAP) and 590-617 (TEDD…PTLH). The segment covering 477-499 (VMKERASPKGEEAKEDPKGHDRT) has biased composition (basic and acidic residues). The Peptidase M14 domain maps to 840–1130 (YPYTYSTLQM…KFCVGLLRLK (291 aa)). Residues His912, Glu915, and His1009 each coordinate Zn(2+). The active-site Proton donor/acceptor is the Glu1094. A Phosphoserine modification is found at Ser1160. A disordered region spans residues 1193–1218 (ENTGDYEPSAQEEALSDSEVSRTHLI).

It belongs to the peptidase M14 family. In terms of assembly, interacts with MYLK. It depends on Zn(2+) as a cofactor. In terms of tissue distribution, widely expressed. Highly expressed in the cerebellum and cortex of adult mouse brain. Expressed at similar levels in both the cerebellum and the cortex throughout all developmental stages. Also expressed in sciatic nerve transection, spinal motor neurons undergoing axon regeneration, testis, heart, eye, lung, pancreas, intestine, stomach, pituitary, spleen, adrenal, kidney and in developing brain. Expression in cranial motor nuclei is the same as that observed in uninjured primary motor neurons. Expression is prevalent in sensory neurons and hippocampal CA3 neurons in addition to regenerating motor neurons.

The protein resides in the cytoplasm. It is found in the cytosol. The protein localises to the nucleus. It localises to the mitochondrion. The enzyme catalyses (L-glutamyl)(n+1)-gamma-L-glutamyl-L-glutamyl-[protein] + H2O = (L-glutamyl)(n)-gamma-L-glutamyl-L-glutamyl-[protein] + L-glutamate. It carries out the reaction C-terminal L-alpha-aminoacyl-L-glutamyl-L-glutamyl-[tubulin] + H2O = C-terminal L-alpha-aminoacyl-L-glutamyl-[tubulin] + L-glutamate. Functionally, metallocarboxypeptidase that mediates protein deglutamylation of tubulin and non-tubulin target proteins. Catalyzes the removal of polyglutamate side chains present on the gamma-carboxyl group of glutamate residues within the C-terminal tail of alpha- and beta-tubulin. Specifically cleaves tubulin long-side-chains, while it is not able to remove the branching point glutamate. Also catalyzes the removal of polyglutamate residues from the carboxy-terminus of alpha-tubulin as well as non-tubulin proteins such as MYLK. Involved in KLF4 deglutamylation which promotes KLF4 proteasome-mediated degradation, thereby negatively regulating cell pluripotency maintenance and embryogenesis. The chain is Cytosolic carboxypeptidase 1 from Mus musculus (Mouse).